We begin with the raw amino-acid sequence, 526 residues long: CTP synthase (526 aa).

An amidoligase domain region spans residues 1–264 (MPQRFIVVTG…HKLIAKELDI (264 aa)). Serine 14 lines the CTP pocket. Serine 14 lines the UTP pocket. Residues 15-20 (GIGKGI) and aspartate 72 contribute to the ATP site. Residues aspartate 72 and glutamate 138 each contribute to the Mg(2+) site. Residues 145 to 147 (DIE), 185 to 190 (KTKPTQ), and lysine 221 each bind CTP. Residues 185–190 (KTKPTQ) and lysine 221 each bind UTP. The Glutamine amidotransferase type-1 domain maps to 282 to 526 (KIGIVGKYLG…VKAAGGKIND (245 aa)). Residue glycine 342 coordinates L-glutamine. Residue cysteine 369 is the Nucleophile; for glutamine hydrolysis of the active site. Residues 370–373 (LGMQ), glutamate 393, and arginine 451 contribute to the L-glutamine site. Residues histidine 499 and glutamate 501 contribute to the active site.

The protein belongs to the CTP synthase family. Homotetramer.

It carries out the reaction UTP + L-glutamine + ATP + H2O = CTP + L-glutamate + ADP + phosphate + 2 H(+). It catalyses the reaction L-glutamine + H2O = L-glutamate + NH4(+). The enzyme catalyses UTP + NH4(+) + ATP = CTP + ADP + phosphate + 2 H(+). It participates in pyrimidine metabolism; CTP biosynthesis via de novo pathway; CTP from UDP: step 2/2. Its activity is regulated as follows. Allosterically activated by GTP, when glutamine is the substrate; GTP has no effect on the reaction when ammonia is the substrate. The allosteric effector GTP functions by stabilizing the protein conformation that binds the tetrahedral intermediate(s) formed during glutamine hydrolysis. Inhibited by the product CTP, via allosteric rather than competitive inhibition. Catalyzes the ATP-dependent amination of UTP to CTP with either L-glutamine or ammonia as the source of nitrogen. Regulates intracellular CTP levels through interactions with the four ribonucleotide triphosphates. This is CTP synthase from Thermosipho africanus (strain TCF52B).